We begin with the raw amino-acid sequence, 332 residues long: 6-phosphogluconolactonase (332 aa).

The protein belongs to the cycloisomerase 2 family.

The catalysed reaction is 6-phospho-D-glucono-1,5-lactone + H2O = 6-phospho-D-gluconate + H(+). Its pathway is carbohydrate degradation; pentose phosphate pathway; D-ribulose 5-phosphate from D-glucose 6-phosphate (oxidative stage): step 2/3. In terms of biological role, catalyzes the hydrolysis of 6-phosphogluconolactone to 6-phosphogluconate. The protein is 6-phosphogluconolactonase of Pectobacterium carotovorum subsp. carotovorum (strain PC1).